A 141-amino-acid chain; its full sequence is Large ribosomal subunit protein uL16 (141 aa).

This sequence belongs to the universal ribosomal protein uL16 family. As to quaternary structure, part of the 50S ribosomal subunit.

Functionally, binds 23S rRNA and is also seen to make contacts with the A and possibly P site tRNAs. The protein is Large ribosomal subunit protein uL16 of Sulfurimonas denitrificans (strain ATCC 33889 / DSM 1251) (Thiomicrospira denitrificans (strain ATCC 33889 / DSM 1251)).